Reading from the N-terminus, the 195-residue chain is NADH-quinone oxidoreductase subunit B (195 aa).

The [4Fe-4S] cluster site is built by Cys74, Cys75, Cys139, and Cys169.

This sequence belongs to the complex I 20 kDa subunit family. NDH-1 is composed of 14 different subunits. Subunits NuoB, C, D, E, F, and G constitute the peripheral sector of the complex. [4Fe-4S] cluster is required as a cofactor.

It is found in the cell inner membrane. The enzyme catalyses a quinone + NADH + 5 H(+)(in) = a quinol + NAD(+) + 4 H(+)(out). In terms of biological role, NDH-1 shuttles electrons from NADH, via FMN and iron-sulfur (Fe-S) centers, to quinones in the respiratory chain. The immediate electron acceptor for the enzyme in this species is believed to be ubiquinone. Couples the redox reaction to proton translocation (for every two electrons transferred, four hydrogen ions are translocated across the cytoplasmic membrane), and thus conserves the redox energy in a proton gradient. In Methylorubrum extorquens (strain PA1) (Methylobacterium extorquens), this protein is NADH-quinone oxidoreductase subunit B.